We begin with the raw amino-acid sequence, 488 residues long: MTKTERYIQLRSMIPEMRRIKRIHFVGIGGAGMGGIAEVLVNEGYQVSGSDIAQNTVTDRLCLLGAKIQIGHAADNVQQVDVVVVSTAINAENPEIIAAKELRIPIVRRAEMLAELMRYRHGVAIAGTHGKTTTTSLIASVYGQAGRDPTFVIGGLLNSAGTNARLGTSRYLIAEADESDASFLHLQPMVSVVTNIEADHMDTYGGDFEKLKSTFVDFLHNLPFYGVAVVCIDDPVVREIMPRIGRHLVTYGFSDDADVQALNFSQQGHQCRFTVRRKGKEDLDLLLNLPGQHNVLNALAAIAVATEDEIDDSALIQALAEFQGIGRRFQHLGKFATPKGEVMLVDDYGHHPSEVAATIKAARAGWPEKRLVMAYQPHRYTRTRDLYEDFIEVLSQVDCLLLLDVYSAGEAPITGADGRALCRSIRLRGQLDPIFIASPDQLAEVLPDVLQEGDLLLTQGAGNIGALSRQLAVTELGFAKVEIAQVPA.

127–133 lines the ATP pocket; the sequence is GTHGKTT.

Belongs to the MurCDEF family.

The protein localises to the cytoplasm. It catalyses the reaction UDP-N-acetyl-alpha-D-muramate + L-alanine + ATP = UDP-N-acetyl-alpha-D-muramoyl-L-alanine + ADP + phosphate + H(+). It functions in the pathway cell wall biogenesis; peptidoglycan biosynthesis. Functionally, cell wall formation. In Shewanella putrefaciens (strain CN-32 / ATCC BAA-453), this protein is UDP-N-acetylmuramate--L-alanine ligase.